The sequence spans 141 residues: VLSPADKTNVKATWDKIGGHAGEYGGEALERTFTAFPTTKTYFPHFDLSHGSAQVKAHGKKVADALTTAVAHMDDLPGALSALSDLHAHKLRVDPVNFKLLSHCLLVTLACHHPADFTPAVHASLDKFFSAVSTVLTSKYR.

The Globin domain maps to 1 to 141 (VLSPADKTNV…VSTVLTSKYR (141 aa)). At Ser3 the chain carries Phosphoserine. Lys7 is subject to N6-succinyllysine. The residue at position 8 (Thr8) is a Phosphothreonine. The residue at position 11 (Lys11) is an N6-succinyllysine. Lys16 carries the N6-acetyllysine; alternate modification. N6-succinyllysine; alternate is present on Lys16. Tyr24 carries the post-translational modification Phosphotyrosine. Lys40 carries the post-translational modification N6-succinyllysine. At Ser49 the chain carries Phosphoserine. Residue His58 coordinates O2. His87 is a binding site for heme b. A Phosphoserine modification is found at Ser102. Thr108 is modified (phosphothreonine). Ser124 carries the phosphoserine modification. Phosphothreonine occurs at positions 134 and 137. A Phosphoserine modification is found at Ser138.

The protein belongs to the globin family. Heterotetramer of two alpha chains and two beta chains. As to expression, red blood cells.

Functionally, involved in oxygen transport from the lung to the various peripheral tissues. Hemopressin acts as an antagonist peptide of the cannabinoid receptor CNR1. Hemopressin-binding efficiently blocks cannabinoid receptor CNR1 and subsequent signaling. The polypeptide is Hemoglobin subunit alpha (HBA) (Phoca vitulina (Harbor seal)).